A 93-amino-acid chain; its full sequence is HssA/B-like protein 23 (93 aa).

Belongs to the hssA/B family.

This Dictyostelium discoideum (Social amoeba) protein is HssA/B-like protein 23 (hssl23).